The chain runs to 397 residues: pH-sensitive adenylate cyclase MT1302 (397 aa).

Positions Met-1–Arg-191 are regulatory domain. Residues His-192 to Ala-206 are linker. The segment at Pro-211–Pro-397 is catalytic domain. In terms of domain architecture, Guanylate cyclase spans Thr-217–Thr-325. Position 222 (Asp-222) interacts with Mn(2+). Lys-261 is a binding site for substrate. Asp-265 is a binding site for Mn(2+). Arg-298 lines the ATP pocket. Asp-312 is a binding site for substrate.

It belongs to the adenylyl cyclase class-4/guanylyl cyclase family. As to quaternary structure, homodimer. Mn(2+) serves as cofactor. Mg(2+) is required as a cofactor.

It carries out the reaction ATP = 3',5'-cyclic AMP + diphosphate. Catalyzes the formation of the second messenger cAMP. The polypeptide is pH-sensitive adenylate cyclase MT1302 (Mycobacterium tuberculosis (strain CDC 1551 / Oshkosh)).